A 266-amino-acid polypeptide reads, in one-letter code: Phosphate import ATP-binding protein PstB (266 aa).

The ABC transporter domain maps to 15–261; it reads VQKSVVNKLN…PKNKQTEDYI (247 aa). Residue 50–57 participates in ATP binding; it reads GPSGCGKS.

Belongs to the ABC transporter superfamily. Phosphate importer (TC 3.A.1.7) family. The complex is composed of two ATP-binding proteins (PstB), two transmembrane proteins (PstC and PstA) and a solute-binding protein (PstS).

It is found in the cell inner membrane. The catalysed reaction is phosphate(out) + ATP + H2O = ADP + 2 phosphate(in) + H(+). In terms of biological role, part of the ABC transporter complex PstSACB involved in phosphate import. Responsible for energy coupling to the transport system. The protein is Phosphate import ATP-binding protein PstB of Nitrosomonas europaea (strain ATCC 19718 / CIP 103999 / KCTC 2705 / NBRC 14298).